The chain runs to 511 residues: Exodeoxyribonuclease 7 large subunit (511 aa).

This sequence belongs to the XseA family. As to quaternary structure, heterooligomer composed of large and small subunits.

The protein resides in the cytoplasm. The enzyme catalyses Exonucleolytic cleavage in either 5'- to 3'- or 3'- to 5'-direction to yield nucleoside 5'-phosphates.. In terms of biological role, bidirectionally degrades single-stranded DNA into large acid-insoluble oligonucleotides, which are then degraded further into small acid-soluble oligonucleotides. This chain is Exodeoxyribonuclease 7 large subunit, found in Brucella melitensis biotype 2 (strain ATCC 23457).